A 229-amino-acid polypeptide reads, in one-letter code: All-trans retinoic acid-induced differentiation factor (229 aa).

The N-terminal stretch at 1–30 is a signal peptide; that stretch reads MAPHDPGSLTTLVPWAAALLLALGVERALA. Residues 31–199 are Extracellular-facing; that stretch reads LPEICTQCPG…YKCMRQGSFS (169 aa). Asn-44, Asn-79, Asn-157, and Asn-168 each carry an N-linked (GlcNAc...) asparagine glycan. The 42-residue stretch at 152–193 folds into the EGF-like domain; the sequence is QKNLCNNTGDPEMCPENGSCVPDGPGLLQCVCADGFHGYKCM. 3 disulfides stabilise this stretch: Cys-156–Cys-171, Cys-165–Cys-181, and Cys-183–Cys-192. A helical membrane pass occupies residues 200–220; it reads LLMFFGILGATTLSVSILLWA. Residues 221 to 229 lie on the Cytoplasmic side of the membrane; that stretch reads TQRRKAKTS.

In terms of assembly, interacts with NELL1; the interaction promotes osteoblastic differentiation and mineralization. Interacts with SLC37A3; the interaction is direct and both proteins are mutually dependent for their stability. In terms of tissue distribution, weakly expressed in hematopoietic cell lines.

The protein localises to the nucleus envelope. It localises to the cell membrane. It is found in the lysosome membrane. Its function is as follows. Promotes osteoblast cell differentiation and terminal mineralization. Plays a role in inducing the cell cycle arrest via inhibiting CCND1 expression in all-trans-retinoic acid (ATRA) signal pathway. In osteoclasts, forms a transporter complex with ATRAID for nitrogen-containing-bisphophonates (N-BPs) required for releasing N-BP molecules that have trafficked to lysosomes through fluid-phase endocytosis into the cytosol. This Homo sapiens (Human) protein is All-trans retinoic acid-induced differentiation factor.